The following is a 320-amino-acid chain: Protein TsetseEP (320 aa).

Residues 1–19 (MKFFISFAFLCLVLSCVAA) form the signal peptide. The disordered stretch occupies residues 192–320 (GLPEPEPEPE…ESKPNSLFNF (129 aa)). Acidic residues predominate over residues 194-308 (PEPEPEPEPE…EPEPEPEPQP (115 aa)). The interval 194 to 311 (PEPEPEPEPE…PEPEPQPEPE (118 aa)) is 59 X 2 AA tandem repeats of P-E.

In terms of tissue distribution, expressed in the gut, but not salivary glands, of female and male flies (at protein level). Present in vesicles in midgut cells and in the lumen of the gut.

It is found in the secreted. The sequence is that of Protein TsetseEP from Glossina morsitans morsitans (Savannah tsetse fly).